Consider the following 195-residue polypeptide: Xanthine phosphoribosyltransferase (195 aa).

L20 and N27 together coordinate xanthine. 128 to 132 (ANGQA) is a binding site for 5-phospho-alpha-D-ribose 1-diphosphate. K156 is a xanthine binding site.

It belongs to the purine/pyrimidine phosphoribosyltransferase family. Xpt subfamily. In terms of assembly, homodimer.

Its subcellular location is the cytoplasm. The enzyme catalyses XMP + diphosphate = xanthine + 5-phospho-alpha-D-ribose 1-diphosphate. Its pathway is purine metabolism; XMP biosynthesis via salvage pathway; XMP from xanthine: step 1/1. In terms of biological role, converts the preformed base xanthine, a product of nucleic acid breakdown, to xanthosine 5'-monophosphate (XMP), so it can be reused for RNA or DNA synthesis. The sequence is that of Xanthine phosphoribosyltransferase from Limosilactobacillus fermentum (strain NBRC 3956 / LMG 18251) (Lactobacillus fermentum).